The following is a 310-amino-acid chain: Calcium homeostasis modulator protein 5 (310 aa).

A run of 4 helical transmembrane segments spans residues 17–37 (TIGY…FSMV), 49–69 (FPYG…VGFF), 101–121 (LIKV…VALL), and 181–201 (QILG…GTCY).

The protein belongs to the CALHM family.

It is found in the membrane. Functionally, pore-forming subunit of a voltage-gated ion channel. In Danio rerio (Zebrafish), this protein is Calcium homeostasis modulator protein 5 (calhm5.1).